The chain runs to 507 residues: Maturase K (507 aa).

Belongs to the intron maturase 2 family. MatK subfamily.

It localises to the plastid. It is found in the chloroplast. Its function is as follows. Usually encoded in the trnK tRNA gene intron. Probably assists in splicing its own and other chloroplast group II introns. This is Maturase K from Persea americana (Avocado).